Here is a 620-residue protein sequence, read N- to C-terminus: 1-deoxy-D-xylulose-5-phosphate synthase (620 aa).

Residues histidine 80 and 121 to 123 contribute to the thiamine diphosphate site; that span reads GHS. Aspartate 152 provides a ligand contact to Mg(2+). Residues 153–154, asparagine 181, tyrosine 288, and glutamate 370 contribute to the thiamine diphosphate site; that span reads GA. Asparagine 181 is a Mg(2+) binding site.

This sequence belongs to the transketolase family. DXPS subfamily. Homodimer. The cofactor is Mg(2+). Requires thiamine diphosphate as cofactor.

The catalysed reaction is D-glyceraldehyde 3-phosphate + pyruvate + H(+) = 1-deoxy-D-xylulose 5-phosphate + CO2. The protein operates within metabolic intermediate biosynthesis; 1-deoxy-D-xylulose 5-phosphate biosynthesis; 1-deoxy-D-xylulose 5-phosphate from D-glyceraldehyde 3-phosphate and pyruvate: step 1/1. Its function is as follows. Catalyzes the acyloin condensation reaction between C atoms 2 and 3 of pyruvate and glyceraldehyde 3-phosphate to yield 1-deoxy-D-xylulose-5-phosphate (DXP). The chain is 1-deoxy-D-xylulose-5-phosphate synthase from Enterobacter sp. (strain 638).